The primary structure comprises 249 residues: MKTKPKSAYRRILLKLSGEALVGEEGFGIDPKVLDRMALEIKSLIEVGVQVGLVIGGGNIFRGAGLAEAGMNRVVGDHMGMLATVMNGLAMRDALQRSHVNSRLMSAIPLNGVCDDYNWAKAIRYLKQGTVVIFAAGTGNPFFTTDSAACLRGIEIEADAVLKGTKVDGVFDADPAKNPDAKLYKEIDYQLVLEKELKVMDLAAFTLARDHSLPIRVFNMNKPGALNRVVLGEDEGTTIKHCETIIEKE.

ATP is bound at residue 15 to 18 (KLSG). Positions 23–28 (GEEGFG) are involved in allosteric activation by GTP. Gly57 contacts UMP. 2 residues coordinate ATP: Gly58 and Arg62. UMP contacts are provided by residues Asp77 and 138–145 (TGNPFFTT). Residues Thr165, Phe171, and Asp174 each contribute to the ATP site.

This sequence belongs to the UMP kinase family. Homohexamer.

It is found in the cytoplasm. The catalysed reaction is UMP + ATP = UDP + ADP. Its pathway is pyrimidine metabolism; CTP biosynthesis via de novo pathway; UDP from UMP (UMPK route): step 1/1. Its activity is regulated as follows. Allosterically activated by GTP. Inhibited by UTP. Its function is as follows. Catalyzes the reversible phosphorylation of UMP to UDP. This is Uridylate kinase from Psychromonas ingrahamii (strain DSM 17664 / CCUG 51855 / 37).